Consider the following 338-residue polypeptide: MNTEATHDQNEALTTGVRLRNAREQLGLSQQAVAERLCLKVSTVRDIEEDKAPADLASTFLRGYIRSYARLVHIPEEELLPGLEKQAPLRAAKVAPMQSFSLGKRRKKRDGWLMTFTWLVLFVVIGLSGAWWWQDHKAQQEEITTMADQSSAELNANGTNSQSIPLENSTTTVPEATPAPAAPVDTTANEQTPAASTPAPVTEPQQNAVVPPSQANVDTATTAPAAPATTTTPDTATPLPTDQAGVTTPAADPNALVMNFTADCWLEVTDATGKKLFSGMQRKDGNLNLTGQAPYKLKIGAPAAVQIQYQGKPVDLSRFIRTNQVARLTLNAEQSPAQ.

Residues 1–111 lie on the Cytoplasmic side of the membrane; it reads MNTEATHDQN…LGKRRKKRDG (111 aa). The 53-residue stretch at 19-71 folds into the HTH cro/C1-type domain; that stretch reads LRNAREQLGLSQQAVAERLCLKVSTVRDIEEDKAPADLASTFLRGYIRSYARL. A DNA-binding region (H-T-H motif) is located at residues 30–49; that stretch reads QQAVAERLCLKVSTVRDIEE. Residues 112 to 132 form a helical; Signal-anchor for type II membrane protein membrane-spanning segment; the sequence is WLMTFTWLVLFVVIGLSGAWW. Topologically, residues 133-338 are periplasmic; that stretch reads WQDHKAQQEE…TLNAEQSPAQ (206 aa). Over residues 155-169 the composition is skewed to polar residues; the sequence is NANGTNSQSIPLENS. The tract at residues 155 to 240 is disordered; that stretch reads NANGTNSQSI…TTPDTATPLP (86 aa). Residues 170-188 are compositionally biased toward low complexity; that stretch reads TTTVPEATPAPAAPVDTTA. Over residues 203-217 the composition is skewed to polar residues; sequence EPQQNAVVPPSQANV. The span at 218–240 shows a compositional bias: low complexity; the sequence is DTATTAPAAPATTTTPDTATPLP.

It belongs to the RodZ family.

Its subcellular location is the cell inner membrane. Functionally, cytoskeletal protein that is involved in cell-shape control through regulation of the length of the long axis. The chain is Cytoskeleton protein RodZ from Escherichia fergusonii (strain ATCC 35469 / DSM 13698 / CCUG 18766 / IAM 14443 / JCM 21226 / LMG 7866 / NBRC 102419 / NCTC 12128 / CDC 0568-73).